The sequence spans 347 residues: Globoside alpha-1,3-N-acetylgalactosaminyltransferase 1 (347 aa).

Residues methionine 1–arginine 5 lie on the Cytoplasmic side of the membrane. A helical; Signal-anchor for type II membrane protein membrane pass occupies residues leucine 6–tyrosine 26. Topologically, residues methionine 27–serine 347 are lumenal. N-linked (GlcNAc...) asparagine glycosylation occurs at asparagine 108. Substrate is bound by residues phenylalanine 116–tyrosine 121, aspartate 206–aspartate 208, and histidine 228–tyrosine 231. The Mn(2+) site is built by aspartate 206 and aspartate 208. Glutamate 298 (nucleophile) is an active-site residue.

The protein belongs to the glycosyltransferase 6 family. It depends on Mn(2+) as a cofactor.

It is found in the golgi apparatus membrane. It carries out the reaction a globoside Gb4Cer (d18:1(4E)) + UDP-N-acetyl-alpha-D-galactosamine = a globoside Forssman (d18:1(4E)) + UDP + H(+). It catalyses the reaction a globoside Gb4Cer + UDP-N-acetyl-alpha-D-galactosamine = a globoside IV3GalNAc-Gb4Cer + UDP + H(+). The protein operates within protein modification; protein glycosylation. In terms of biological role, catalyzes the formation of Forssman glycolipid via the addition of N-acetylgalactosamine (GalNAc) in alpha-1,3-linkage to GalNAcb-1,3Gala-1,4Galb-1,4GlcCer (Gb4Cer). Forssman glycolipid (also called Forssman antigen; FG) probably serves for adherence of some pathogens such as E.coli uropathogenic strains. This Canis lupus familiaris (Dog) protein is Globoside alpha-1,3-N-acetylgalactosaminyltransferase 1.